A 249-amino-acid chain; its full sequence is Demethylmenaquinone methyltransferase (249 aa).

S-adenosyl-L-methionine contacts are provided by residues T67, D87, and 115-116; that span reads DA.

This sequence belongs to the class I-like SAM-binding methyltransferase superfamily. MenG/UbiE family.

It catalyses the reaction a 2-demethylmenaquinol + S-adenosyl-L-methionine = a menaquinol + S-adenosyl-L-homocysteine + H(+). It functions in the pathway quinol/quinone metabolism; menaquinone biosynthesis; menaquinol from 1,4-dihydroxy-2-naphthoate: step 2/2. Functionally, methyltransferase required for the conversion of demethylmenaquinol (DMKH2) to menaquinol (MKH2). This Leptospira interrogans serogroup Icterohaemorrhagiae serovar copenhageni (strain Fiocruz L1-130) protein is Demethylmenaquinone methyltransferase.